A 346-amino-acid polypeptide reads, in one-letter code: Pheromone receptor 2 (346 aa).

The next 7 helical transmembrane spans lie at 8 to 28, 34 to 54, 71 to 94, 115 to 135, 160 to 180, 219 to 239, and 270 to 290; these read VSFGVLCLLAGCISTSSCLIH, IGVLLMMFWCFTGLVNKGINA, LSAIIERTWQFGLCCSALCVLQRL, LIDFGVGLGLPALQIPMFFIV, FIYHLWRLLVSLVCAVYAVLV, VLVSAGQFYVIIQSLQIGGLL, and LSILRWFSLTPAMALFVFFGL.

It belongs to the G-protein coupled receptor 4 family.

It localises to the membrane. Functionally, receptor for the A1 pheromone, a prenylated mating factor. The polypeptide is Pheromone receptor 2 (PRA2) (Mycosarcoma maydis (Corn smut fungus)).